Consider the following 226-residue polypeptide: 7-cyano-7-deazaguanine synthase (226 aa).

10–20 (LSGGLDSATAA) lines the ATP pocket. Residues Cys191, Cys199, Cys202, and Cys205 each coordinate Zn(2+).

It belongs to the QueC family. Zn(2+) serves as cofactor.

It carries out the reaction 7-carboxy-7-deazaguanine + NH4(+) + ATP = 7-cyano-7-deazaguanine + ADP + phosphate + H2O + H(+). Its pathway is purine metabolism; 7-cyano-7-deazaguanine biosynthesis. Catalyzes the ATP-dependent conversion of 7-carboxy-7-deazaguanine (CDG) to 7-cyano-7-deazaguanine (preQ(0)). The sequence is that of 7-cyano-7-deazaguanine synthase from Parasynechococcus marenigrum (strain WH8102).